The chain runs to 272 residues: Ribonuclease HII (272 aa).

In terms of domain architecture, RNase H type-2 spans 87–272; that stretch reads KYVAGVDEVG…HRMSFLKNIL (186 aa). A divalent metal cation contacts are provided by aspartate 93, glutamate 94, and aspartate 188.

It belongs to the RNase HII family. It depends on Mn(2+) as a cofactor. The cofactor is Mg(2+).

It localises to the cytoplasm. The catalysed reaction is Endonucleolytic cleavage to 5'-phosphomonoester.. Endonuclease that specifically degrades the RNA of RNA-DNA hybrids. The polypeptide is Ribonuclease HII (Clostridium perfringens (strain SM101 / Type A)).